A 180-amino-acid polypeptide reads, in one-letter code: Adenine phosphoribosyltransferase (180 aa).

This sequence belongs to the purine/pyrimidine phosphoribosyltransferase family. Homodimer.

It localises to the cytoplasm. The catalysed reaction is AMP + diphosphate = 5-phospho-alpha-D-ribose 1-diphosphate + adenine. The protein operates within purine metabolism; AMP biosynthesis via salvage pathway; AMP from adenine: step 1/1. Functionally, catalyzes a salvage reaction resulting in the formation of AMP, that is energically less costly than de novo synthesis. The protein is Adenine phosphoribosyltransferase of Actinobacillus succinogenes (strain ATCC 55618 / DSM 22257 / CCUG 43843 / 130Z).